A 485-amino-acid polypeptide reads, in one-letter code: Adenosylhomocysteinase (485 aa).

Substrate-binding residues include Thr-60, Asp-146, and Glu-208. Residue 209 to 211 (TTT) participates in NAD(+) binding. Residues Lys-238 and Asp-242 each coordinate substrate. NAD(+) contacts are provided by residues Asn-243, 272–277 (GYGDVG), Glu-295, Asn-330, 351–353 (IGH), and Asn-399.

The protein belongs to the adenosylhomocysteinase family. The cofactor is NAD(+).

Its subcellular location is the cytoplasm. The catalysed reaction is S-adenosyl-L-homocysteine + H2O = L-homocysteine + adenosine. It participates in amino-acid biosynthesis; L-homocysteine biosynthesis; L-homocysteine from S-adenosyl-L-homocysteine: step 1/1. In terms of biological role, may play a key role in the regulation of the intracellular concentration of adenosylhomocysteine. In Streptomyces coelicolor (strain ATCC BAA-471 / A3(2) / M145), this protein is Adenosylhomocysteinase.